Here is a 299-residue protein sequence, read N- to C-terminus: Putative syntaxin-2 (299 aa).

The Cytoplasmic segment spans residues 1–270; it reads MRDRLNEFQS…SAMRKKICVA (270 aa). Residues 112-146 adopt a coiled-coil conformation; it reads EKRMRQNQLELLKDNLNKLINLFNETHQDYKSRVS. One can recognise a t-SNARE coiled-coil homology domain in the interval 193–255; that stretch reads YEDVKKRHGE…KQGSANVKTA (63 aa). A helical; Anchor for type IV membrane protein membrane pass occupies residues 271–291; that stretch reads AILITILLILIIVAIILAVVL. Topologically, residues 292 to 299 are extracellular; it reads SRGNNNNK.

Belongs to the syntaxin family.

The protein resides in the membrane. Potentially involved in docking of synaptic vesicles at presynaptic active zones. The sequence is that of Putative syntaxin-2 (syx-2) from Caenorhabditis elegans.